A 207-amino-acid chain; its full sequence is LexA repressor (207 aa).

Residues 28 to 48 (VREIGEAVGLASSSTVHGHLA) constitute a DNA-binding region (H-T-H motif). Active-site for autocatalytic cleavage activity residues include S129 and K167.

The protein belongs to the peptidase S24 family. As to quaternary structure, homodimer.

It catalyses the reaction Hydrolysis of Ala-|-Gly bond in repressor LexA.. Represses a number of genes involved in the response to DNA damage (SOS response), including recA and lexA. In the presence of single-stranded DNA, RecA interacts with LexA causing an autocatalytic cleavage which disrupts the DNA-binding part of LexA, leading to derepression of the SOS regulon and eventually DNA repair. In Geobacillus thermodenitrificans (strain NG80-2), this protein is LexA repressor.